The following is a 312-amino-acid chain: 4-hydroxyphenylacetate decarboxylase activating enzyme (312 aa).

The region spanning 16–299 is the Radical SAM core domain; sequence HDGPGCRTSV…MEHLQQLYLD (284 aa). 7 residues coordinate [4Fe-4S] cluster: C30, C34, C37, C56, C62, C65, and C101. An S-adenosyl-L-methionine-binding site is contributed by 36 to 38; the sequence is WCA. 2 4Fe-4S ferredoxin-type domains span residues 47-79 and 80-112; these read KHIM…FSED and GKLK…CVKE. Residues G140, 189–191, and H263 contribute to the S-adenosyl-L-methionine site; that span reads DVK.

The protein belongs to the organic radical-activating enzymes family. As to quaternary structure, monomer. Requires [4Fe-4S] cluster as cofactor.

It catalyses the reaction glycyl-[protein] + reduced [flavodoxin] + S-adenosyl-L-methionine = glycin-2-yl radical-[protein] + semiquinone [flavodoxin] + 5'-deoxyadenosine + L-methionine + H(+). Functionally, catalyzes activation of 4-hydroxyphenylacetate decarboxylase under anaerobic conditions by generation of an organic free radical on a glycine residue, via a homolytic cleavage of S-adenosyl-L-methionine (SAM). The chain is 4-hydroxyphenylacetate decarboxylase activating enzyme from Clostridium scatologenes.